The following is a 394-amino-acid chain: Cobalt-precorrin-5B C(1)-methyltransferase (394 aa).

The protein belongs to the CbiD family.

It carries out the reaction Co-precorrin-5B + S-adenosyl-L-methionine = Co-precorrin-6A + S-adenosyl-L-homocysteine. The protein operates within cofactor biosynthesis; adenosylcobalamin biosynthesis; cob(II)yrinate a,c-diamide from sirohydrochlorin (anaerobic route): step 6/10. In terms of biological role, catalyzes the methylation of C-1 in cobalt-precorrin-5B to form cobalt-precorrin-6A. This chain is Cobalt-precorrin-5B C(1)-methyltransferase, found in Clostridium beijerinckii (strain ATCC 51743 / NCIMB 8052) (Clostridium acetobutylicum).